Consider the following 165-residue polypeptide: UPF0114 protein ESA_00283 (165 aa).

3 consecutive transmembrane segments (helical) span residues 15–35 (LLAP…VKFF), 53–73 (LILL…LVMV), and 136–156 (LMWY…MGYL).

This sequence belongs to the UPF0114 family.

It localises to the cell membrane. The polypeptide is UPF0114 protein ESA_00283 (Cronobacter sakazakii (strain ATCC BAA-894) (Enterobacter sakazakii)).